A 109-amino-acid chain; its full sequence is Nucleoid-associated protein ASA_2087 (109 aa).

Disordered regions lie at residues 1 to 23 (MFGK…RMQK) and 87 to 109 (QSKS…KLPF). Over residues 11 to 23 (MKQAQQMQERMQK) the composition is skewed to low complexity.

This sequence belongs to the YbaB/EbfC family. Homodimer.

The protein resides in the cytoplasm. The protein localises to the nucleoid. Binds to DNA and alters its conformation. May be involved in regulation of gene expression, nucleoid organization and DNA protection. This is Nucleoid-associated protein ASA_2087 from Aeromonas salmonicida (strain A449).